A 431-amino-acid polypeptide reads, in one-letter code: Histidine--tRNA ligase (431 aa).

This sequence belongs to the class-II aminoacyl-tRNA synthetase family.

It localises to the cytoplasm. The catalysed reaction is tRNA(His) + L-histidine + ATP = L-histidyl-tRNA(His) + AMP + diphosphate + H(+). The protein is Histidine--tRNA ligase (hisS) of Pyrococcus abyssi (strain GE5 / Orsay).